A 237-amino-acid polypeptide reads, in one-letter code: uncharacterized protein (237 aa).

The region spanning serine 3–leucine 116 is the Response regulatory domain. Aspartate 54 is modified (4-aspartylphosphate). An HTH LytTR-type domain is found at isoleucine 135–phenylalanine 236.

This is an uncharacterized protein from Vibrio cholerae serotype O1 (strain ATCC 39315 / El Tor Inaba N16961).